The primary structure comprises 512 residues: Protein SHC1 (512 aa).

The span at 101-113 (EQDEFENDVEDDA) shows a compositional bias: acidic residues. 2 disordered regions span residues 101–122 (EQDE…EKSQ) and 144–165 (DGNS…SVAL). 4 Sel1-like repeats span residues 318–353 (PDAQ…KRLH), 354–389 (IESV…TKNH), 390–429 (PAAM…SMAS), and 433–470 (CGAP…ALGH).

Belongs to the SKT5 family.

Its subcellular location is the cytoplasm. The protein resides in the cytoplasmic granule membrane. Functionally, required for the activation of chitin synthase III (CHS3) activity during the sporulation process. The protein is Protein SHC1 (SHC1) of Saccharomyces cerevisiae (strain YJM789) (Baker's yeast).